The sequence spans 241 residues: Folate receptor alpha (241 aa).

An N-terminal signal peptide occupies residues 1-19 (MAWQMTQLLLLALVAAAWG). Cystine bridges form between cysteine 36-cysteine 64, cysteine 56-cysteine 104, cysteine 65-cysteine 108, cysteine 88-cysteine 174, cysteine 95-cysteine 145, cysteine 134-cysteine 208, cysteine 138-cysteine 188, and cysteine 151-cysteine 168. Asparagine 68 carries an N-linked (GlcNAc...) asparagine glycan. Residues aspartate 102, tyrosine 106, 123–127 (WRKER), 156–161 (HKGWNW), and serine 195 each bind folate. Asparagine 160 is a glycosylation site (N-linked (GlcNAc...) asparagine). The GPI-anchor amidated serine moiety is linked to residue serine 234. Positions 235–241 (GSTPQGI) are cleaved as a propeptide — removed in mature form.

Belongs to the folate receptor family. Post-translationally, the secreted form is derived from the membrane-bound form either by cleavage of the GPI anchor, or/and by proteolysis catalyzed by a metalloprotease. Detected in milk (at protein level).

It is found in the cell membrane. The protein localises to the apical cell membrane. It localises to the basolateral cell membrane. Its subcellular location is the secreted. The protein resides in the cytoplasmic vesicle. It is found in the clathrin-coated vesicle. The protein localises to the endosome. Its function is as follows. Binds to folate and reduced folic acid derivatives and mediates delivery of 5-methyltetrahydrofolate and folate analogs into the interior of cells. Has high affinity for folate and folic acid analogs at neutral pH. Exposure to slightly acidic pH after receptor endocytosis triggers a conformation change that strongly reduces its affinity for folates and mediates their release. Required for normal embryonic development and normal cell proliferation. This is Folate receptor alpha (FOLR1) from Bos taurus (Bovine).